A 194-amino-acid polypeptide reads, in one-letter code: Probable RNA polymerase sigma factor HI_1459 (194 aa).

A Polymerase core binding motif is present at residues 45 to 58 (DLVQEAFLSAFKNL). A DNA-binding region (H-T-H motif) is located at residues 161–180 (SEEICQETHLTSSNLHTTLY).

It belongs to the sigma-70 factor family. ECF subfamily.

The polypeptide is Probable RNA polymerase sigma factor HI_1459 (Haemophilus influenzae (strain ATCC 51907 / DSM 11121 / KW20 / Rd)).